The primary structure comprises 100 residues: Integration host factor subunit alpha (100 aa).

Residues 54 to 73 (DLRDKRQRPGRNPKTGEEIP) are disordered.

This sequence belongs to the bacterial histone-like protein family. In terms of assembly, heterodimer of an alpha and a beta chain.

This protein is one of the two subunits of integration host factor, a specific DNA-binding protein that functions in genetic recombination as well as in transcriptional and translational control. This is Integration host factor subunit alpha from Pseudomonas aeruginosa (strain UCBPP-PA14).